Consider the following 467-residue polypeptide: ATP synthase subunit beta (467 aa).

Residue 154–161 coordinates ATP; sequence GGAGVGKT.

This sequence belongs to the ATPase alpha/beta chains family. F-type ATPases have 2 components, CF(1) - the catalytic core - and CF(0) - the membrane proton channel. CF(1) has five subunits: alpha(3), beta(3), gamma(1), delta(1), epsilon(1). CF(0) has three main subunits: a(1), b(2) and c(9-12). The alpha and beta chains form an alternating ring which encloses part of the gamma chain. CF(1) is attached to CF(0) by a central stalk formed by the gamma and epsilon chains, while a peripheral stalk is formed by the delta and b chains.

The protein resides in the cell inner membrane. The catalysed reaction is ATP + H2O + 4 H(+)(in) = ADP + phosphate + 5 H(+)(out). Its function is as follows. Produces ATP from ADP in the presence of a proton gradient across the membrane. The catalytic sites are hosted primarily by the beta subunits. The sequence is that of ATP synthase subunit beta from Leptospira interrogans serogroup Icterohaemorrhagiae serovar copenhageni (strain Fiocruz L1-130).